Consider the following 142-residue polypeptide: Hemoglobin subunit alpha (142 aa).

In terms of domain architecture, Globin spans Val2 to Arg142. Residue Ser4 is modified to Phosphoserine. An N6-succinyllysine modification is found at Lys8. Thr9 bears the Phosphothreonine mark. An N6-succinyllysine modification is found at Lys12. Position 17 is an N6-acetyllysine; alternate (Lys17). Lys17 carries the N6-succinyllysine; alternate modification. Tyr25 is modified (phosphotyrosine). Ser36 carries the post-translational modification Phosphoserine. N6-succinyllysine is present on Lys41. Ser50 carries the post-translational modification Phosphoserine. His59 lines the O2 pocket. His88 is a heme b binding site. Position 103 is a phosphoserine (Ser103). A Phosphothreonine modification is found at Thr109. Ser125 carries the post-translational modification Phosphoserine. Phosphothreonine is present on residues Thr135 and Thr138. Ser139 carries the phosphoserine modification.

The protein belongs to the globin family. In terms of assembly, heterotetramer of two alpha chains and two beta chains. Red blood cells.

Involved in oxygen transport from the lung to the various peripheral tissues. Its function is as follows. Hemopressin acts as an antagonist peptide of the cannabinoid receptor CNR1. Hemopressin-binding efficiently blocks cannabinoid receptor CNR1 and subsequent signaling. This chain is Hemoglobin subunit alpha (HBA), found in Ailuropoda melanoleuca (Giant panda).